Here is a 388-residue protein sequence, read N- to C-terminus: Putative 8-amino-7-oxononanoate synthase (388 aa).

A substrate-binding site is contributed by Arg-18. Position 105-106 (105-106) interacts with pyridoxal 5'-phosphate; sequence GY. A substrate-binding site is contributed by His-130. Pyridoxal 5'-phosphate-binding positions include Ser-176, 201-204, and 232-235; these read DDAH and TLSK. The residue at position 235 (Lys-235) is an N6-(pyridoxal phosphate)lysine. Thr-349 is a substrate binding site.

This sequence belongs to the class-II pyridoxal-phosphate-dependent aminotransferase family. BioF subfamily. In terms of assembly, homodimer. Pyridoxal 5'-phosphate is required as a cofactor.

The catalysed reaction is 6-carboxyhexanoyl-[ACP] + L-alanine + H(+) = (8S)-8-amino-7-oxononanoate + holo-[ACP] + CO2. The protein operates within cofactor biosynthesis; biotin biosynthesis. Functionally, catalyzes the decarboxylative condensation of pimeloyl-[acyl-carrier protein] and L-alanine to produce 8-amino-7-oxononanoate (AON), [acyl-carrier protein], and carbon dioxide. This chain is Putative 8-amino-7-oxononanoate synthase (bioF), found in Acetivibrio thermocellus (strain ATCC 27405 / DSM 1237 / JCM 9322 / NBRC 103400 / NCIMB 10682 / NRRL B-4536 / VPI 7372) (Clostridium thermocellum).